The chain runs to 457 residues: tRNA-2-methylthio-N(6)-dimethylallyladenosine synthase (457 aa).

In terms of domain architecture, MTTase N-terminal spans 18-133 (KKLFIETYGC…LPELIASVEA (116 aa)). [4Fe-4S] cluster is bound by residues cysteine 27, cysteine 63, cysteine 97, cysteine 171, cysteine 175, and cysteine 178. The Radical SAM core domain maps to 157 to 390 (CGNHISGFVS…IALQNRLSAE (234 aa)). In terms of domain architecture, TRAM spans 393–456 (NRCIGKTYEV…SATLKGEEVF (64 aa)).

The protein belongs to the methylthiotransferase family. MiaB subfamily. As to quaternary structure, monomer. Requires [4Fe-4S] cluster as cofactor.

The protein resides in the cytoplasm. It carries out the reaction N(6)-dimethylallyladenosine(37) in tRNA + (sulfur carrier)-SH + AH2 + 2 S-adenosyl-L-methionine = 2-methylsulfanyl-N(6)-dimethylallyladenosine(37) in tRNA + (sulfur carrier)-H + 5'-deoxyadenosine + L-methionine + A + S-adenosyl-L-homocysteine + 2 H(+). Catalyzes the methylthiolation of N6-(dimethylallyl)adenosine (i(6)A), leading to the formation of 2-methylthio-N6-(dimethylallyl)adenosine (ms(2)i(6)A) at position 37 in tRNAs that read codons beginning with uridine. This is tRNA-2-methylthio-N(6)-dimethylallyladenosine synthase from Bacteroides fragilis (strain ATCC 25285 / DSM 2151 / CCUG 4856 / JCM 11019 / LMG 10263 / NCTC 9343 / Onslow / VPI 2553 / EN-2).